We begin with the raw amino-acid sequence, 31 residues long: U1-theraphotoxin-Cv1a (31 aa).

3 disulfide bridges follow: cysteine 2–cysteine 16, cysteine 9–cysteine 21, and cysteine 15–cysteine 28.

Expressed by the venom gland.

It is found in the secreted. Insecticidal toxin that induces reversible paralysis in crickets but not in cockroaches and mice. Molecular target unknown. The polypeptide is U1-theraphotoxin-Cv1a (Coremiocnemis valida (Singapore tarantula)).